The chain runs to 304 residues: Dihydroorotate dehydrogenase B (NAD(+)), catalytic subunit (304 aa).

Residues Ser-21 and 45 to 46 (KA) each bind FMN. Substrate is bound by residues Lys-45 and 69-73 (NAIGL). Asn-99 and Asn-127 together coordinate FMN. Asn-127 is a binding site for substrate. Catalysis depends on Cys-130, which acts as the Nucleophile. 2 residues coordinate FMN: Lys-165 and Ile-191. 192-193 (NT) is a substrate binding site. Residues Gly-217, 243-244 (GG), and 265-266 (GT) contribute to the FMN site.

This sequence belongs to the dihydroorotate dehydrogenase family. Type 1 subfamily. Heterotetramer of 2 PyrK and 2 PyrD type B subunits. FMN is required as a cofactor.

The protein localises to the cytoplasm. It carries out the reaction (S)-dihydroorotate + NAD(+) = orotate + NADH + H(+). Its pathway is pyrimidine metabolism; UMP biosynthesis via de novo pathway; orotate from (S)-dihydroorotate (NAD(+) route): step 1/1. Functionally, catalyzes the conversion of dihydroorotate to orotate with NAD(+) as electron acceptor. This Listeria monocytogenes serotype 4b (strain F2365) protein is Dihydroorotate dehydrogenase B (NAD(+)), catalytic subunit (pyrD).